Reading from the N-terminus, the 427-residue chain is Serine hydroxymethyltransferase (427 aa).

(6S)-5,6,7,8-tetrahydrofolate is bound by residues Leu-122 and 126–128 (GHL). Residue Lys-231 is modified to N6-(pyridoxal phosphate)lysine.

It belongs to the SHMT family. As to quaternary structure, homodimer. Requires pyridoxal 5'-phosphate as cofactor.

Its subcellular location is the cytoplasm. The catalysed reaction is (6R)-5,10-methylene-5,6,7,8-tetrahydrofolate + glycine + H2O = (6S)-5,6,7,8-tetrahydrofolate + L-serine. The protein operates within one-carbon metabolism; tetrahydrofolate interconversion. It participates in amino-acid biosynthesis; glycine biosynthesis; glycine from L-serine: step 1/1. Functionally, catalyzes the reversible interconversion of serine and glycine with tetrahydrofolate (THF) serving as the one-carbon carrier. This reaction serves as the major source of one-carbon groups required for the biosynthesis of purines, thymidylate, methionine, and other important biomolecules. Also exhibits THF-independent aldolase activity toward beta-hydroxyamino acids, producing glycine and aldehydes, via a retro-aldol mechanism. The protein is Serine hydroxymethyltransferase of Acidobacterium capsulatum (strain ATCC 51196 / DSM 11244 / BCRC 80197 / JCM 7670 / NBRC 15755 / NCIMB 13165 / 161).